Here is a 149-residue protein sequence, read N- to C-terminus: uncharacterized protein (149 aa).

This is an uncharacterized protein from Acanthamoeba polyphaga mimivirus (APMV).